The sequence spans 127 residues: uncharacterized protein (127 aa).

The segment at 1–24 is disordered; that stretch reads PLKTKPIDNNLPHRTGYNQASKQQ.

This is an uncharacterized protein from Homo sapiens (Human).